The sequence spans 466 residues: Glutamate decarboxylase (466 aa).

The residue at position 277 (lysine 277) is an N6-(pyridoxal phosphate)lysine.

The protein belongs to the group II decarboxylase family. The cofactor is pyridoxal 5'-phosphate.

It catalyses the reaction L-glutamate + H(+) = 4-aminobutanoate + CO2. Its function is as follows. Converts internalized glutamate to GABA and increases the internal pH. Involved in glutamate-dependent acid resistance. This is Glutamate decarboxylase (gadB) from Lactococcus lactis subsp. cremoris (strain MG1363).